We begin with the raw amino-acid sequence, 135 residues long: Small ribosomal subunit protein uS8 (135 aa).

It belongs to the universal ribosomal protein uS8 family. Part of the 30S ribosomal subunit. Contacts proteins S5 and S12.

One of the primary rRNA binding proteins, it binds directly to 16S rRNA central domain where it helps coordinate assembly of the platform of the 30S subunit. The protein is Small ribosomal subunit protein uS8 of Nocardioides sp. (strain ATCC BAA-499 / JS614).